A 214-amino-acid chain; its full sequence is MIDNYSTAREKMLREQIVARGVTDMATLDAILEVPRHFFVDEGQRMRAYGDYPLSITEGQTISQPYIVAYMTSLLQLTASDTVLEIGTGSGYQAAILSKICRQVYTVECIHSLLNKARKVFDSLRYFNIRSKYDDGSRGWSEFAPYDAIIVTAGSPEIPTPLLDQLADGGRMVIPVGPRYEQVLKRVTKEGDDFVVEDLAPVRFVDLVGVHGWK.

The active site involves S63.

This sequence belongs to the methyltransferase superfamily. L-isoaspartyl/D-aspartyl protein methyltransferase family.

It localises to the cytoplasm. The catalysed reaction is [protein]-L-isoaspartate + S-adenosyl-L-methionine = [protein]-L-isoaspartate alpha-methyl ester + S-adenosyl-L-homocysteine. In terms of biological role, catalyzes the methyl esterification of L-isoaspartyl residues in peptides and proteins that result from spontaneous decomposition of normal L-aspartyl and L-asparaginyl residues. It plays a role in the repair and/or degradation of damaged proteins. The sequence is that of Protein-L-isoaspartate O-methyltransferase from Desulfotalea psychrophila (strain LSv54 / DSM 12343).